A 260-amino-acid chain; its full sequence is Pyridoxine 5'-phosphate synthase (260 aa).

2 residues coordinate 3-amino-2-oxopropyl phosphate: N7 and R18. The Proton acceptor role is filled by H43. Residues R45 and H50 each coordinate 1-deoxy-D-xylulose 5-phosphate. The active-site Proton acceptor is E83. Residue T113 participates in 1-deoxy-D-xylulose 5-phosphate binding. The active-site Proton donor is the H208. 3-amino-2-oxopropyl phosphate is bound by residues D209 and 230–231 (GH).

This sequence belongs to the PNP synthase family. In terms of assembly, homooctamer; tetramer of dimers.

Its subcellular location is the cytoplasm. The enzyme catalyses 3-amino-2-oxopropyl phosphate + 1-deoxy-D-xylulose 5-phosphate = pyridoxine 5'-phosphate + phosphate + 2 H2O + H(+). Its pathway is cofactor biosynthesis; pyridoxine 5'-phosphate biosynthesis; pyridoxine 5'-phosphate from D-erythrose 4-phosphate: step 5/5. In terms of biological role, catalyzes the complicated ring closure reaction between the two acyclic compounds 1-deoxy-D-xylulose-5-phosphate (DXP) and 3-amino-2-oxopropyl phosphate (1-amino-acetone-3-phosphate or AAP) to form pyridoxine 5'-phosphate (PNP) and inorganic phosphate. The sequence is that of Pyridoxine 5'-phosphate synthase from Leptospira biflexa serovar Patoc (strain Patoc 1 / Ames).